Consider the following 393-residue polypeptide: Chorismate synthase (393 aa).

NADP(+) contacts are provided by Arg-40 and Arg-46. FMN is bound by residues 129-131, 249-250, Gly-301, 316-320, and Arg-342; these read RSS, QA, and KPIPT.

The protein belongs to the chorismate synthase family. Homotetramer. The cofactor is FMNH2.

It carries out the reaction 5-O-(1-carboxyvinyl)-3-phosphoshikimate = chorismate + phosphate. The protein operates within metabolic intermediate biosynthesis; chorismate biosynthesis; chorismate from D-erythrose 4-phosphate and phosphoenolpyruvate: step 7/7. In terms of biological role, catalyzes the anti-1,4-elimination of the C-3 phosphate and the C-6 proR hydrogen from 5-enolpyruvylshikimate-3-phosphate (EPSP) to yield chorismate, which is the branch point compound that serves as the starting substrate for the three terminal pathways of aromatic amino acid biosynthesis. This reaction introduces a second double bond into the aromatic ring system. The polypeptide is Chorismate synthase (Geobacter sulfurreducens (strain ATCC 51573 / DSM 12127 / PCA)).